Here is a 306-residue protein sequence, read N- to C-terminus: Pantothenate kinase (306 aa).

91–98 provides a ligand contact to ATP; it reads GSVAVGKS.

It belongs to the prokaryotic pantothenate kinase family.

It is found in the cytoplasm. It carries out the reaction (R)-pantothenate + ATP = (R)-4'-phosphopantothenate + ADP + H(+). Its pathway is cofactor biosynthesis; coenzyme A biosynthesis; CoA from (R)-pantothenate: step 1/5. This chain is Pantothenate kinase, found in Streptococcus pneumoniae (strain 70585).